Consider the following 343-residue polypeptide: Pyridoxal 5'-phosphate synthase subunit PDX1 (343 aa).

Asp-73 lines the D-ribose 5-phosphate pocket. Residue Lys-130 is the Schiff-base intermediate with D-ribose 5-phosphate of the active site. Gly-202 is a binding site for D-ribose 5-phosphate. Residue Gln-214 coordinates D-glyceraldehyde 3-phosphate. Residues Gly-263 and 284–285 each bind D-ribose 5-phosphate; that span reads GS.

This sequence belongs to the PdxS/SNZ family.

The catalysed reaction is aldehydo-D-ribose 5-phosphate + D-glyceraldehyde 3-phosphate + L-glutamine = pyridoxal 5'-phosphate + L-glutamate + phosphate + 3 H2O + H(+). It participates in cofactor biosynthesis; pyridoxal 5'-phosphate biosynthesis. In terms of biological role, catalyzes the formation of pyridoxal 5'-phosphate from ribose 5-phosphate (RBP), glyceraldehyde 3-phosphate (G3P) and ammonia. The ammonia is provided by PDX2. Can also use ribulose 5-phosphate and dihydroxyacetone phosphate as substrates, resulting from enzyme-catalyzed isomerization of RBP and G3P, respectively. Also plays an indirect role in resistance to singlet oxygen-generating photosensitizers. The protein is Pyridoxal 5'-phosphate synthase subunit PDX1 (PDX1) of Cercospora nicotianae (Barn spot disease fungus).